A 393-amino-acid polypeptide reads, in one-letter code: Methylthioribose kinase (393 aa).

Residues asparagine 38, lysine 53, and 107–109 each bind ATP; that span reads EDL. Residue aspartate 225 coordinates substrate. 242–244 contacts ATP; that stretch reads DPE. Arginine 332 is a substrate binding site.

The protein belongs to the methylthioribose kinase family. Homodimer.

It catalyses the reaction 5-(methylsulfanyl)-D-ribose + ATP = 5-(methylsulfanyl)-alpha-D-ribose 1-phosphate + ADP + H(+). It participates in amino-acid biosynthesis; L-methionine biosynthesis via salvage pathway; S-methyl-5-thio-alpha-D-ribose 1-phosphate from S-methyl-5'-thioadenosine (hydrolase route): step 2/2. In terms of biological role, catalyzes the phosphorylation of methylthioribose into methylthioribose-1-phosphate. This chain is Methylthioribose kinase, found in Bacillus cereus (strain 03BB102).